The sequence spans 728 residues: Catalase B (728 aa).

The signal sequence occupies residues 1–15; the sequence is MRLTFIPSLIGVANA. Positions 16-27 are excised as a propeptide; the sequence is VCPYMTGELNRR. Residue His-102 is part of the active site. Asn-120 carries an N-linked (GlcNAc...) asparagine glycan. Residue Asn-175 is part of the active site. Position 389 (Tyr-389) interacts with heme. Asn-448 and Asn-551 each carry an N-linked (GlcNAc...) asparagine glycan.

This sequence belongs to the catalase family. Homotetramer. The cofactor is heme. Post-translationally, N-glycosylated.

The protein resides in the secreted. The catalysed reaction is 2 H2O2 = O2 + 2 H2O. Occurs in almost all aerobically respiring organisms and serves to protect cells from the toxic effects of hydrogen peroxide. The protein is Catalase B (catB) of Aspergillus fumigatus (strain ATCC MYA-4609 / CBS 101355 / FGSC A1100 / Af293) (Neosartorya fumigata).